The chain runs to 409 residues: Dipeptidase 1 (409 aa).

An N-terminal signal peptide occupies residues 1–16 (MWTSWWLWPLVAVCAA). 2 residues coordinate Zn(2+): His36 and Asp38. N-linked (GlcNAc...) asparagine glycosylation is present at Asn57. A disulfide bond links Cys87 and Cys170. Glu141 serves as a coordination point for Zn(2+). Substrate is bound at residue His168. Residues His214 and His235 each coordinate Zn(2+). An intrachain disulfide couples Cys242 to Cys274. Residue Arg246 coordinates substrate. Residue Asn279 is glycosylated (N-linked (GlcNAc...) asparagine). Substrate is bound at residue Asp304. Ser384 carries GPI-anchor amidated serine lipidation. Positions 385 to 409 (AAPSLHLPPGSLLASLVPLLLLSLP) are cleaved as a propeptide — removed in mature form.

The protein belongs to the metallo-dependent hydrolases superfamily. Peptidase M19 family. Homodimer; disulfide-linked. Zn(2+) serves as cofactor.

The protein resides in the apical cell membrane. It is found in the cell projection. It localises to the microvillus membrane. Its subcellular location is the cell membrane. The catalysed reaction is an L-aminoacyl-L-amino acid + H2O = 2 an L-alpha-amino acid. It catalyses the reaction leukotriene D4 + H2O = leukotriene E4 + glycine. The enzyme catalyses L-cystine-bis-glycine + 2 H2O = L-cystine + 2 glycine. It carries out the reaction a beta-lactam + H2O = a substituted beta-amino acid. The catalysed reaction is glycyldehydrophenylalanine + H2O = 2,3-didehydrophenylalanine + glycine. Inhibited by L-penicillamine. Inhibited by cilastatin. In terms of biological role, hydrolyzes a wide range of dipeptides. Hydrolyzes the conversion of leukotriene D4 to leukotriene E4. Hydrolyzes cystinyl-bis-glycine (cys-bis-gly) formed during glutathione degradation. Also possesses beta lactamase activity and hydrolytically inactivates beta-lactam antibiotics. Functionally, independently of its dipeptidase activity, acts as an adhesion receptor for neutrophil recruitment from bloodstream into inflamed lungs and liver. The chain is Dipeptidase 1 (DPEP1) from Sus scrofa (Pig).